A 220-amino-acid chain; its full sequence is 7-cyano-7-deazaguanine synthase (220 aa).

10–20 (FSGGQDSTTCL) provides a ligand contact to ATP. The Zn(2+) site is built by C186, C195, C198, and C201.

Belongs to the QueC family. Homodimer. The cofactor is Zn(2+).

The catalysed reaction is 7-carboxy-7-deazaguanine + NH4(+) + ATP = 7-cyano-7-deazaguanine + ADP + phosphate + H2O + H(+). The protein operates within purine metabolism; 7-cyano-7-deazaguanine biosynthesis. Its function is as follows. Catalyzes the ATP-dependent conversion of 7-carboxy-7-deazaguanine (CDG) to 7-cyano-7-deazaguanine (preQ(0)). The polypeptide is 7-cyano-7-deazaguanine synthase (Bacillus cereus (strain G9842)).